Consider the following 141-residue polypeptide: uncharacterized protein (141 aa).

2 consecutive transmembrane segments (helical) span residues 20 to 42 (FLVN…FCLA) and 52 to 74 (LHLC…IFTL).

The protein resides in the cell membrane. This is an uncharacterized protein from Archaeoglobus fulgidus (strain ATCC 49558 / DSM 4304 / JCM 9628 / NBRC 100126 / VC-16).